We begin with the raw amino-acid sequence, 435 residues long: Metacaspase-1A (435 aa).

Disordered stretches follow at residues 1-46 (MQNH…APPP) and 106-129 (YQNP…VAFG). Residues 36 to 46 (SPQPGYGAPPP) are compositionally biased toward pro residues. Catalysis depends on residues His231 and Cys287.

The protein belongs to the peptidase C14B family.

In terms of biological role, involved in cell death (apoptosis). In Neosartorya fischeri (strain ATCC 1020 / DSM 3700 / CBS 544.65 / FGSC A1164 / JCM 1740 / NRRL 181 / WB 181) (Aspergillus fischerianus), this protein is Metacaspase-1A (casA).